The primary structure comprises 283 residues: MCVIFFCADSNPQPGGYKLILASNRDEFFARATLSAAKWANADHVYGGIDLEPGREGGTWLAIGHSAGFFKVGALLNLTGEPKPRDAVGRGMIVADYVTRADEEHSILNYNERLLKDCTKYSAFNFVSIEIGSASQPARVKLLSNVPPTLEDFQNGECYGFGNSLPHSPFEKVRHGKQEFEAIVKAHGEASVETLSAQLMQLLRNKHKFWPDDELKTRAPNWGEGLSSLNVHIEEHAYGSRTHSVVLVDSENKMHFIEETMTGLDPHGEWNKTHIEKDFQNGV.

This sequence belongs to the Tango2 family.

Its subcellular location is the cytoplasm. The protein localises to the mitochondrion. It is found in the golgi apparatus. Functionally, may play a role in Golgi organization. The polypeptide is Transport and Golgi organization protein 2 (Tango2) (Drosophila melanogaster (Fruit fly)).